The sequence spans 162 residues: Caveolin-2 (162 aa).

Topologically, residues 1-86 are cytoplasmic; the sequence is MGLETEKADV…FEISKYVIYK (86 aa). Position 19 is a phosphotyrosine; by SRC (Tyr-19). Phosphoserine occurs at positions 20 and 23. The residue at position 27 (Tyr-27) is a Phosphotyrosine; by SRC. At Ser-36 the chain carries Phosphoserine. An intramembrane region (helical) is located at residues 87-107; it reads FLTLFLAIPLAFAAGILFATL. Over 108 to 162 the chain is Cytoplasmic; it reads SCLHIWIIMPFVKTCLMVLPSVQTIWKSITDVVIAPLCTSVGRSFSSVSLQLSHD.

The protein belongs to the caveolin family. As to quaternary structure, monomer or homodimer. Interacts with CAV1; the interaction forms a stable heterooligomeric complex that is required for targeting to lipid rafts and for caveolae formation. Tyrosine phosphorylated forms do not form heterooligomers with the Tyr-19-phosphorylated form existing as a monomer or dimer, and the Tyr-27-form as a monomer only. Interacts (tyrosine phosphorylated form) with the SH2 domain-containing proteins, RASA1, NCK1 and SRC. Interacts (tyrosine phosphorylated form) with INSR, the interaction (Tyr-27-phosphorylated form) is increased on insulin stimulation. Interacts (Tyr-19 phosphorylated form) with MAPK1 (phosphorylated form); the interaction, promoted by insulin, leads to nuclear location and MAPK1 activation. Interacts with STAT3; the interaction is increased on insulin-induced tyrosine phosphorylation leading to STAT activation. In terms of processing, phosphorylated on serine and tyrosine residues. CAV1 promotes phosphorylation on Ser-23 which then targets the complex to the plasma membrane, lipid rafts and caveolae. Phosphorylation on Ser-36 appears to modulate mitosis in endothelial cells. Phosphorylation on both Tyr-19 and Tyr-27 is required for insulin-induced 'Ser-727' phosphorylation of STAT3 and its activation. Phosphorylation on Tyr-19 is required for insulin-induced phosphorylation of MAPK1 and DNA binding of STAT3. Tyrosine phosphorylation is induced by both EGF and insulin (By. similarity).

The protein localises to the nucleus. It is found in the cytoplasm. It localises to the golgi apparatus membrane. Its subcellular location is the cell membrane. The protein resides in the membrane. The protein localises to the caveola. May act as a scaffolding protein within caveolar membranes. Interacts directly with G-protein alpha subunits and can functionally regulate their activity. Acts as an accessory protein in conjunction with CAV1 in targeting to lipid rafts and driving caveolae formation. The Ser-36 phosphorylated form has a role in modulating mitosis in endothelial cells. Positive regulator of cellular mitogenesis of the MAPK signaling pathway. Required for the insulin-stimulated nuclear translocation and activation of MAPK1 and STAT3, and the subsequent regulation of cell cycle progression. In Neofelis nebulosa (Clouded leopard), this protein is Caveolin-2 (CAV2).